A 256-amino-acid chain; its full sequence is 5'-nucleotidase SurE (256 aa).

Residues aspartate 9, aspartate 10, serine 42, and asparagine 95 each contribute to the a divalent metal cation site.

It belongs to the SurE nucleotidase family. The cofactor is a divalent metal cation.

It localises to the cytoplasm. The catalysed reaction is a ribonucleoside 5'-phosphate + H2O = a ribonucleoside + phosphate. Nucleotidase that shows phosphatase activity on nucleoside 5'-monophosphates. The sequence is that of 5'-nucleotidase SurE from Campylobacter curvus (strain 525.92).